A 374-amino-acid polypeptide reads, in one-letter code: Chaperone protein DnaJ (374 aa).

The J domain maps to 5–69 (DYYEVLGVSK…DKKAKYDQFG (65 aa)). The CR-type zinc finger occupies 141 to 223 (GVNKKTILNL…CHGKGVESKR (83 aa)). Residues Cys-154, Cys-157, Cys-171, Cys-174, Cys-197, Cys-200, Cys-211, and Cys-214 each coordinate Zn(2+). CXXCXGXG motif repeat units lie at residues 154-161 (CTKCDGVG), 171-178 (CTKCNGAG), 197-204 (CDKCNGVG), and 211-218 (CKNCHGKG).

The protein belongs to the DnaJ family. As to quaternary structure, homodimer. Zn(2+) serves as cofactor.

Its subcellular location is the cytoplasm. Functionally, participates actively in the response to hyperosmotic and heat shock by preventing the aggregation of stress-denatured proteins and by disaggregating proteins, also in an autonomous, DnaK-independent fashion. Unfolded proteins bind initially to DnaJ; upon interaction with the DnaJ-bound protein, DnaK hydrolyzes its bound ATP, resulting in the formation of a stable complex. GrpE releases ADP from DnaK; ATP binding to DnaK triggers the release of the substrate protein, thus completing the reaction cycle. Several rounds of ATP-dependent interactions between DnaJ, DnaK and GrpE are required for fully efficient folding. Also involved, together with DnaK and GrpE, in the DNA replication of plasmids through activation of initiation proteins. The sequence is that of Chaperone protein DnaJ from Mesoplasma florum (strain ATCC 33453 / NBRC 100688 / NCTC 11704 / L1) (Acholeplasma florum).